The chain runs to 351 residues: UDP-3-O-acylglucosamine N-acyltransferase (351 aa).

H240 (proton acceptor) is an active-site residue.

The protein belongs to the transferase hexapeptide repeat family. LpxD subfamily. In terms of assembly, homotrimer.

It carries out the reaction a UDP-3-O-[(3R)-3-hydroxyacyl]-alpha-D-glucosamine + a (3R)-hydroxyacyl-[ACP] = a UDP-2-N,3-O-bis[(3R)-3-hydroxyacyl]-alpha-D-glucosamine + holo-[ACP] + H(+). The protein operates within bacterial outer membrane biogenesis; LPS lipid A biosynthesis. Its function is as follows. Catalyzes the N-acylation of UDP-3-O-acylglucosamine using 3-hydroxyacyl-ACP as the acyl donor. Is involved in the biosynthesis of lipid A, a phosphorylated glycolipid that anchors the lipopolysaccharide to the outer membrane of the cell. This is UDP-3-O-acylglucosamine N-acyltransferase from Pseudomonas savastanoi pv. phaseolicola (strain 1448A / Race 6) (Pseudomonas syringae pv. phaseolicola (strain 1448A / Race 6)).